Reading from the N-terminus, the 239-residue chain is Tetraspanin-9 (239 aa).

Over 1-13 (MARGCLCCLKYMM) the chain is Cytoplasmic. The helical transmembrane segment at 14-34 (FLFNLIFWLCGCGLLGVGIWL) threads the bilayer. Topologically, residues 35–55 (SVSQGNFATFSPSFPSLSAAN) are extracellular. Residues 56 to 76 (LVIAIGTIVMVTGFLGCLGAI) form a helical membrane-spanning segment. At 77–85 (KENRCLLLS) the chain is on the cytoplasmic side. Residues 86–106 (FFIVLLIILLAELILIILFFV) traverse the membrane as a helical segment. At 107-203 (YMDKVNENAR…VKMWFDDNKH (97 aa)) the chain is on the extracellular side. Asn-180 carries an N-linked (GlcNAc...) asparagine glycan. A helical membrane pass occupies residues 204–224 (VLGTVGMCILIMQILGMAFSM). The Cytoplasmic segment spans residues 225-239 (TLFQHIHRTGKKYDA).

This sequence belongs to the tetraspanin (TM4SF) family. As to quaternary structure, found in a complex with GP6. Post-translationally, glycosylated.

The protein localises to the membrane. The protein is Tetraspanin-9 (TSPAN9) of Sus scrofa (Pig).